A 360-amino-acid polypeptide reads, in one-letter code: Phenylalanine--tRNA ligase alpha subunit (360 aa).

Residue glutamate 260 participates in Mg(2+) binding.

It belongs to the class-II aminoacyl-tRNA synthetase family. Phe-tRNA synthetase alpha subunit type 1 subfamily. Tetramer of two alpha and two beta subunits. The cofactor is Mg(2+).

The protein resides in the cytoplasm. It carries out the reaction tRNA(Phe) + L-phenylalanine + ATP = L-phenylalanyl-tRNA(Phe) + AMP + diphosphate + H(+). This chain is Phenylalanine--tRNA ligase alpha subunit, found in Methylocella silvestris (strain DSM 15510 / CIP 108128 / LMG 27833 / NCIMB 13906 / BL2).